Here is an 815-residue protein sequence, read N- to C-terminus: Minichromosome loss protein 1 (815 aa).

WD repeat units lie at residues 11–50 (AHTD…EPDS), 53–90 (NHQD…EHTL), 93–132 (RTTL…QIFS), 135–174 (PAKA…LIKF), and 228–267 (ENHS…VVVE). Residues 306–362 (LKEENDPTKPLTSSKSKNRTSKELDDLFGSDDEQSQNVNDLDGNSANEENEFINHDG) form a disordered region. Positions 340-352 (SQNVNDLDGNSAN) are enriched in polar residues. The WD 6 repeat unit spans residues 517-553 (ENESPVTISLSSSVVLVCTSAGYVRVFSRQGFPISIH).

In terms of assembly, interacts with pof3 and pol1.

Its subcellular location is the nucleus. It localises to the chromosome. Functionally, has a role in regulating DNA replication complexes. Acts as a regulator of post DNA replication initiation. Associates with chromatin during G1 and S phases of mitosis. Required for the transcriptional repression of the outer repeats of the centromeric region. Acts as a polymerase alpha replication accessory factor and is important for S-phase DNA damage survival. Plays a role in lagging-strand synthesis and Ozaki fragment processing, in addition to DNA repair. The protein is Minichromosome loss protein 1 (mcl1) of Schizosaccharomyces pombe (strain 972 / ATCC 24843) (Fission yeast).